The sequence spans 344 residues: MSLTLEDFDYDLPHELIAQTPIKKRDSSRLLELDRQTGEMQDKHFYDIIDQLNPGDAVVMNNSRVMPARLYGVKPETGGHAEVLLLHNTEGDEWETLMKPAKRAKVGTVISFGDGKLTATVTAEKEDGIRMIEFHYDGIFMEILESLGETPLPPYIKEKLDDPDRYQTVYAKENGSAAAPTAGLHWTKELLQKVQDKGIKLVYLTLHVGLGTFRPVEEDNIDDHKMHSEFYRLDEDAAKTLNEVRQNGGRIIATGTTSIRTLETIGSKFDGEIKPDSGWTDIFIKPGYQWKVVDAFITNFHLPKSTLVMLVAAFTGRDMILKAYQHAIDEKYRFFSFGDAMFIH.

It belongs to the QueA family. In terms of assembly, monomer.

The protein localises to the cytoplasm. It catalyses the reaction 7-aminomethyl-7-carbaguanosine(34) in tRNA + S-adenosyl-L-methionine = epoxyqueuosine(34) in tRNA + adenine + L-methionine + 2 H(+). The protein operates within tRNA modification; tRNA-queuosine biosynthesis. Its function is as follows. Transfers and isomerizes the ribose moiety from AdoMet to the 7-aminomethyl group of 7-deazaguanine (preQ1-tRNA) to give epoxyqueuosine (oQ-tRNA). This Lactiplantibacillus plantarum (strain ATCC BAA-793 / NCIMB 8826 / WCFS1) (Lactobacillus plantarum) protein is S-adenosylmethionine:tRNA ribosyltransferase-isomerase.